Consider the following 356-residue polypeptide: MLARAARGTGALLLRGSLLASGRAPRRASSGLPRNTVVLFVPQQEAWVVERMGRFHRILEPGLNILIPVLDRIRYVQSLKEIVINVPEQSAVTLDNVTLQIDGVLYLRIMDPYKASYGVEDPEYAVTQLAQTTMRSELGKLSLDKVFRERESLNASIVDAINQAADCWGIRCLRYEIKDIHVPPRVKESMQMQVEAERRKRATVLESEGTRESAINVAEGKKQAQILASEAEKAEQINQAAGEASAVLAKAKAKAEAIRILAAALTQHNGDAAASLTVAEQYVSAFSKLAKDSNTILLPSNPGDVTSMVAQAMGVYGALTKAPVPGTPDSLSSGSSRDVQGTDASLDEELDRVKMS.

The transit peptide at 1-28 (MLARAARGTGALLLRGSLLASGRAPRRA) directs the protein to the mitochondrion. Ser-17 is modified (phosphoserine; by PKC/PRKCZ). Tyr-124 carries the post-translational modification Phosphotyrosine. At Lys-145 the chain carries N6-acetyllysine; alternate. An N6-succinyllysine; alternate modification is found at Lys-145. A coiled-coil region spans residues 215–252 (INVAEGKKQAQILASEAEKAEQINQAAGEASAVLAKAK). At Lys-233 the chain carries N6-acetyllysine. The interval 321–356 (KAPVPGTPDSLSSGSSRDVQGTDASLDEELDRVKMS) is disordered. A Phosphothreonine modification is found at Thr-327. The span at 329-343 (DSLSSGSSRDVQGTD) shows a compositional bias: polar residues. Ser-330 bears the Phosphoserine mark.

The protein belongs to the band 7/mec-2 family. As to quaternary structure, forms homooligomers. Interacts with MFN2; may form heterooligomers. Interacts with CACNA2D2. Interacts with PHB1 and PHB2; recruits them to cardiolipin-enriched mitochondrial membranes and stabilizes them. Hyperphosphorylated at Ser-17 in some patients with monoclonal gammopathy of undetermined significance (MGUS), multiple myeloma (MM) and Waldenstrom macroglobulinemia due to impaired dephosphorylation by PP2A. In terms of tissue distribution, ubiquitously expressed at low levels. Expressed in lymphoid tissues (at protein level).

Its subcellular location is the cell membrane. It localises to the mitochondrion. The protein localises to the mitochondrion inner membrane. It is found in the mitochondrion intermembrane space. The protein resides in the membrane raft. Its subcellular location is the cytoplasm. It localises to the cytoskeleton. Functionally, mitochondrial protein that probably regulates the biogenesis and the activity of mitochondria. Stimulates cardiolipin biosynthesis, binds cardiolipin-enriched membranes where it recruits and stabilizes some proteins including prohibitin and may therefore act in the organization of functional microdomains in mitochondrial membranes. Through regulation of the mitochondrial function may play a role into several biological processes including cell migration, cell proliferation, T-cell activation, calcium homeostasis and cellular response to stress. May play a role in calcium homeostasis through negative regulation of calcium efflux from mitochondria. Required for mitochondrial hyperfusion a pro-survival cellular response to stress which results in increased ATP production by mitochondria. May also regulate the organization of functional domains at the plasma membrane and play a role in T-cell activation through association with the T-cell receptor signaling complex and its regulation. This is Stomatin-like protein 2, mitochondrial (STOML2) from Homo sapiens (Human).